The sequence spans 320 residues: Cytochrome f (320 aa).

A signal peptide spans 1-35; it reads MQTRNTLSWIREEITRSISVSLMIYIITWASISSA. Residues tyrosine 36, cysteine 56, cysteine 59, and histidine 60 each coordinate heme. The helical transmembrane segment at 286–306 threads the bilayer; sequence VQGLLFFLGSVVLAQIFLVLK.

This sequence belongs to the cytochrome f family. As to quaternary structure, the 4 large subunits of the cytochrome b6-f complex are cytochrome b6, subunit IV (17 kDa polypeptide, petD), cytochrome f and the Rieske protein, while the 4 small subunits are PetG, PetL, PetM and PetN. The complex functions as a dimer. It depends on heme as a cofactor.

The protein localises to the plastid. It localises to the chloroplast thylakoid membrane. Its function is as follows. Component of the cytochrome b6-f complex, which mediates electron transfer between photosystem II (PSII) and photosystem I (PSI), cyclic electron flow around PSI, and state transitions. The polypeptide is Cytochrome f (Olimarabidopsis pumila (Dwarf rocket)).